Consider the following 165-residue polypeptide: Chorismate pyruvate-lyase (165 aa).

4 residues coordinate substrate: methionine 35, arginine 77, leucine 115, and glutamate 156.

The protein belongs to the UbiC family. As to quaternary structure, monomer.

The protein resides in the cytoplasm. It catalyses the reaction chorismate = 4-hydroxybenzoate + pyruvate. It functions in the pathway cofactor biosynthesis; ubiquinone biosynthesis. Removes the pyruvyl group from chorismate, with concomitant aromatization of the ring, to provide 4-hydroxybenzoate (4HB) for the ubiquinone pathway. The protein is Chorismate pyruvate-lyase of Escherichia coli O7:K1 (strain IAI39 / ExPEC).